The primary structure comprises 464 residues: Phosphoglucosamine mutase (464 aa).

The active-site Phosphoserine intermediate is the Ser-112. Positions 112, 252, 254, and 256 each coordinate Mg(2+). Residue Ser-112 is modified to Phosphoserine.

This sequence belongs to the phosphohexose mutase family. Mg(2+) serves as cofactor. In terms of processing, activated by phosphorylation.

The enzyme catalyses alpha-D-glucosamine 1-phosphate = D-glucosamine 6-phosphate. In terms of biological role, catalyzes the conversion of glucosamine-6-phosphate to glucosamine-1-phosphate. The chain is Phosphoglucosamine mutase from Synechococcus sp. (strain CC9605).